Consider the following 882-residue polypeptide: Translation initiation factor IF-2 (882 aa).

3 stretches are compositionally biased toward polar residues: residues 38-56, 97-124, and 140-192; these read NDSNSFVDLHNNSNKAEYS, GGYSQNRDNRTGGYSQNRDNRTGGYSQN, and GGYS…NRDS. 2 disordered regions span residues 38 to 192 and 236 to 274; these read NDSN…NRDS and STPAADSENSKELNRKLGEKKKQQQESQKSYKRKKAETE. Residues 243–259 are compositionally biased toward basic and acidic residues; that stretch reads ENSKELNRKLGEKKKQQ. The region spanning 380–553 is the tr-type G domain; that stretch reads EKPPVITIMG…DMMLLKANPS (174 aa). A G1 region spans residues 389 to 396; the sequence is GHVDHGKT. GTP is bound at residue 389-396; it reads GHVDHGKT. Positions 414 to 418 are G2; sequence GITQH. Residues 435–438 form a G3 region; the sequence is DTPG. Residues 435–439 and 489–492 each bind GTP; these read DTPGH and NKID. A G4 region spans residues 489–492; that stretch reads NKID. The G5 stretch occupies residues 525 to 527; the sequence is SAL.

The protein belongs to the TRAFAC class translation factor GTPase superfamily. Classic translation factor GTPase family. IF-2 subfamily.

The protein resides in the cytoplasm. One of the essential components for the initiation of protein synthesis. Protects formylmethionyl-tRNA from spontaneous hydrolysis and promotes its binding to the 30S ribosomal subunits. Also involved in the hydrolysis of GTP during the formation of the 70S ribosomal complex. The chain is Translation initiation factor IF-2 (infB) from Borreliella burgdorferi (strain ATCC 35210 / DSM 4680 / CIP 102532 / B31) (Borrelia burgdorferi).